The primary structure comprises 1357 residues: MAYSYTEKKRIRKDFSKLPDVMDVPYLLAIQLDSYREFLQAGSIQGSLPRRRLHAAFKSVFPIISYSGNAALEYVGYRLGEPAFDVKECVLRGVTFAVPLRVKVRLIIFDKESSNKAIKDIKEQEVYMGEIPLMTENGTFVINGTERVIVSQMHRSPGVFFDHDRGKTHSSGKLLYSARIIPYRGSWLDFEFDPKDCVFVRIDRRRKLPASVLLRALGYSTEEVLNTFYTTNVFHISGEKLSLELVPQRLAGEVAVMDIHDETGKVIVEQGRRITARHINQLEKAGVKQLDVPMEYVLGRTTAKAIVHPATGEILAECNTEMTTELLIKVAKAQVVRIETLYTNDIDCGPFISDTLKIDTTSNQLEALVEIYRMMRPGEPPTKDAAETLFNNLFFSAERYDLSPLGRMKFNRRIGRTEIEGSGVLSKEDIVEVLKTLVDIRNGKGIVDDIDHLGNRRVRCVGEMAENQFRVGLVRVERAVKERLSMAESEGLMPQDLINAKPVAAAVKEFFGSSQLSQFMDQNNPLSEITHKRRCSALGPGGLTRERAGFEVRDVHPTHYGRVCPIETPEGPNIGLINSLAAYARTNQYGFLESPYRVVKEGVVSDDIVFLSAIEEADHVIAQASAAMNDKKQLIDELVAVRHLNEFTVKAPEDVTLMDVSPKQVVSVAASLIPFLEHDDANRALMGSNMQRQAVPTLRADKPLVGTGMERNVARDSGVCVVRRRGGVIDSVDASRIVVRVADDEVETGERRVDIYNLTKYTRSNQNTCINQRPLVSKGDKVQRGDIMADRASTDMGELALGQNMRIAFMAWNGFNFEDSICLSERVVQEDRFTTIHIQELTCVARDNKLGPREITSGIPNVGEAALNKLDEAGIVYVGAEVGAGDILVGKVTPKGHTQLTPEEKLLRAIFGEKASDVKDTSLRVPTGTQGTVIDVQVFTRDGVERDSRALAIEKMQLDEIPQDLNEEFRIVEGATFERLRSALNGQVVDGGAGLKKGTVITDEVLDGLDDGQWFKLRMAEDALNEQLEKAQQYIVDRRRLLDDKFEDKKRNVQQGDDLAPGVLKIVKVYLAIRRRIQPGDKMAGRHGNKGVVSVIMPVEDMPHDANGTPVDVVLNPLGVPSRMNVGQILETHLGLAAKGLGEKIDRMLEEQRKAAELRVFLTEVYNEIGGRQENLDEFTDEEILALANNLKKGVPMATPVFDGAKEREIKAMLKLADLPESGQMVLFDGRTRNKFERPVTVGYMYMLKLNHLVDDKMHARSTGSYSLVTQQPLGGKAQFGGQRFGEMEVWALEAYGAAYTLQEMLTVKSDDVNGRTKMYKNIVDGDHRMEPGMAESFNVLIKEIRSLGIDIDLETE.

The protein belongs to the RNA polymerase beta chain family. In terms of assembly, the RNAP catalytic core consists of 2 alpha, 1 beta, 1 beta' and 1 omega subunit. When a sigma factor is associated with the core the holoenzyme is formed, which can initiate transcription.

The catalysed reaction is RNA(n) + a ribonucleoside 5'-triphosphate = RNA(n+1) + diphosphate. Its function is as follows. DNA-dependent RNA polymerase catalyzes the transcription of DNA into RNA using the four ribonucleoside triphosphates as substrates. In Pseudomonas putida (Arthrobacter siderocapsulatus), this protein is DNA-directed RNA polymerase subunit beta.